The sequence spans 168 residues: UPF0114 protein PC1_0431 (168 aa).

3 helical membrane-spanning segments follow: residues 15–35 (LLAP…IKFF), 53–73 (LVLV…LVMV), and 136–156 (LMWY…MGYL).

It belongs to the UPF0114 family.

The protein localises to the cell membrane. The sequence is that of UPF0114 protein PC1_0431 from Pectobacterium carotovorum subsp. carotovorum (strain PC1).